The chain runs to 235 residues: MAGRLSESVGSGPGAEAETAADPDAKRDVLEHLCARTHLKQLVMEFDTACPPDEGCNSGAEVNFIESAKETLEEVGKVKSAFESKALVIKRIQLMDALRKRVKENDGCARLIVETMRDIIKLNWEIIQAHQQARVIRENLNDIRRKRYFLKQAEGEKALRIFTTVRKKKEVVRMKIAEKLKFIHRNVQYERKVTTLVQNILQNIIVGCQINWAKDPSLRAIILQLEKDISIQNLL.

The interval 1–23 (MAGRLSESVGSGPGAEAETAADP) is disordered. Residues 125–145 (EIIQAHQQARVIRENLNDIRR) adopt a coiled-coil conformation.

It belongs to the CENP-H/MCM16 family. As to quaternary structure, component of the CENPA-HI complex, at least composed of CENPH, CENPI, CENPK, CENPL, CENPM, CENPO and CENPP. Interacts with NDC80.

Its subcellular location is the nucleus. It localises to the chromosome. The protein localises to the centromere. It is found in the kinetochore. In terms of biological role, component of the CENPA-HI complex, a centromeric complex involved in assembly of kinetochore proteins, mitotic progression and chromosome segregation. Required for the localization of CENPC but not CENPA to the centromere. It however may be involved in incorporation of newly synthesized CENPA into centromeres via its interaction with the CENPA-NAC complex. The chain is Centromere protein H (CENPH) from Gallus gallus (Chicken).